The chain runs to 722 residues: MAKEEGTSVEPRQRKKQRTSGSQEAKAEKIRRTPAPERAPKYVSFQRFAKIVIGCLAAVISGMMHVFYLSAYHERKFWFSNRQELEREITFQGDSAIYYSYYKDMLKAPSFERGVYELTHNNKTISLKTINAMQQMSLYPELIASVLYQATGSNEVIEPVYFYIGIVFGLQGMYVTALFVTSWLMSGTWLAGMLTVAWFLINRVDTTRIEYSIPLRENWALPYFACQVAALTGYLKRNLNTYAERFCYLLLSTSTYTFMMVWEYSHYVLFLQAVSLLLLDIFSVEQSDKVYEVYKVYIFSLFLGYLLQFENPALLVSPLLSLVGAFMLVKCLQLNGKKGTFVAKVIKVFEFYLLCTLPVTLNLIVKMFVPHKENEHVLKFLEVKFGLNMTKNFTLNWLLCQESLQAPSQDFFFRLTQSSLLPFYVLVLIICLLSMTQVFFRRMSGKSKKETVTLEDGRIGERPEIIYHVIHTLLLGSLAMLMEGLKFIWTPYVCMLAAFGVCSPELWMTLLKWLRLRTVHPMLLALILSMAVPTIIGLSLWKEFFPRLITELTELQEFYDPDTVELMTWIKRQAPVAAVFAGSPQLMGVIKLCTGWTVTSLPLYSDDDLLQRNENIYQIYSKRSAEDIYKILTSYKANYLIVEDAICNELGTTRGCRVKDLLDIANGHVVFEEGDKLTYSKYGRFCHEVKINYSPYVNYFTRVYWNRSYFVYKVNTVISFQS.

The segment at 1 to 34 (MAKEEGTSVEPRQRKKQRTSGSQEAKAEKIRRTP) is disordered. N-acetylalanine is present on alanine 2. The segment covering 25 to 34 (AKAEKIRRTP) has biased composition (basic and acidic residues). The next 12 helical transmembrane spans lie at 51–71 (IVIG…YLSA), 160–177 (VYFY…YVTA), 183–201 (WLMS…WFLI), 246–262 (FCYL…MMVW), 268–284 (VLFL…IFSV), 291–307 (YEVY…GYLL), 313–331 (ALLV…LVKC), 351–369 (FYLL…KMFV), 420–440 (LLPF…QVFF), 465–485 (IIYH…MEGL), 487–507 (FIWT…PELW), and 521–541 (PMLL…LSLW).

This sequence belongs to the dpy-19 family.

Its subcellular location is the membrane. Its function is as follows. Probable C-mannosyltransferase that mediates C-mannosylation of tryptophan residues on target proteins. In Mus musculus (Mouse), this protein is Probable C-mannosyltransferase DPY19L4 (Dpy19l4).